Here is a 458-residue protein sequence, read N- to C-terminus: V-type sodium ATPase subunit B (458 aa).

Belongs to the ATPase alpha/beta chains family.

In terms of biological role, involved in ATP-driven sodium extrusion. This is V-type sodium ATPase subunit B (ntpB) from Enterococcus hirae (strain ATCC 9790 / DSM 20160 / JCM 8729 / LMG 6399 / NBRC 3181 / NCIMB 6459 / NCDO 1258 / NCTC 12367 / WDCM 00089 / R).